We begin with the raw amino-acid sequence, 608 residues long: Protein trichome birefringence (608 aa).

A helical; Signal-anchor for type II membrane protein transmembrane segment spans residues 38-58 (TFAYAFVITFVSFTLFFAFSP). Composition is skewed to polar residues over residues 101-137 (STKP…QTPA) and 145-203 (AKNT…TSPA). The interval 101–236 (STKPTNRSSD…TPKKQTKTVD (136 aa)) is disordered. Positions 215–227 (TNSSSNSSTASST) are enriched in low complexity. The short motif at 328-330 (GDS) is the GDS motif element. Positions 573–587 (DCSHWCLPGVPDSWN) match the DCXHWCLPGXXDXWN motif motif.

Belongs to the PC-esterase family. TBL subfamily. Expressed in leaf vasculature, growing part of the root, expanding inflorescence stems and trichomes.

The protein resides in the membrane. In terms of biological role, required during cellulose deposition. May act as a bridging protein that binds pectin and other cell wall polysaccharides. Probably involved in maintaining esterification of pectins. May be involved in the specific O-acetylation of cell wall polymers. The protein is Protein trichome birefringence (TBR) of Arabidopsis thaliana (Mouse-ear cress).